Reading from the N-terminus, the 429-residue chain is 3-phosphoshikimate 1-carboxyvinyltransferase (429 aa).

Residues Lys11, Ser12, and Arg16 each coordinate 3-phosphoshikimate. Lys11 lines the phosphoenolpyruvate pocket. Phosphoenolpyruvate-binding residues include Gly82 and Arg110. 3-phosphoshikimate contacts are provided by Ser155, Gln157, Asp302, and Lys329. Gln157 contributes to the phosphoenolpyruvate binding site. Asp302 (proton acceptor) is an active-site residue. Phosphoenolpyruvate is bound by residues Arg333 and Arg385.

The protein belongs to the EPSP synthase family. As to quaternary structure, monomer.

The protein resides in the cytoplasm. It catalyses the reaction 3-phosphoshikimate + phosphoenolpyruvate = 5-O-(1-carboxyvinyl)-3-phosphoshikimate + phosphate. The protein operates within metabolic intermediate biosynthesis; chorismate biosynthesis; chorismate from D-erythrose 4-phosphate and phosphoenolpyruvate: step 6/7. Catalyzes the transfer of the enolpyruvyl moiety of phosphoenolpyruvate (PEP) to the 5-hydroxyl of shikimate-3-phosphate (S3P) to produce enolpyruvyl shikimate-3-phosphate and inorganic phosphate. The protein is 3-phosphoshikimate 1-carboxyvinyltransferase of Helicobacter pylori (strain P12).